Reading from the N-terminus, the 336-residue chain is Speedy protein E1 (336 aa).

The disordered stretch occupies residues 16–50; the sequence is GVDPSPPCRSLGWKRKREWSDESEEEPEKELAPEP. Residues 36–50 are compositionally biased toward acidic residues; it reads DESEEEPEKELAPEP.

It belongs to the Speedy/Ringo family. Predominantly expressed in testis and heart.

The sequence is that of Speedy protein E1 from Homo sapiens (Human).